Consider the following 496-residue polypeptide: Glycerol kinase 2 (496 aa).

Thr-11 serves as a coordination point for ADP. Thr-11, Thr-12, and Ser-13 together coordinate ATP. Thr-11 contributes to the sn-glycerol 3-phosphate binding site. An ADP-binding site is contributed by Arg-15. Sn-glycerol 3-phosphate is bound by residues Arg-81, Glu-82, Tyr-133, and Asp-242. Glycerol is bound by residues Arg-81, Glu-82, Tyr-133, Asp-242, and Gln-243. Positions 264 and 307 each coordinate ADP. Residues Thr-264, Gly-307, Gln-311, and Gly-408 each coordinate ATP. ADP contacts are provided by Gly-408 and Asn-412.

Belongs to the FGGY kinase family.

It catalyses the reaction glycerol + ATP = sn-glycerol 3-phosphate + ADP + H(+). It participates in polyol metabolism; glycerol degradation via glycerol kinase pathway; sn-glycerol 3-phosphate from glycerol: step 1/1. Inhibited by fructose 1,6-bisphosphate (FBP). Functionally, key enzyme in the regulation of glycerol uptake and metabolism. Catalyzes the phosphorylation of glycerol to yield sn-glycerol 3-phosphate. This is Glycerol kinase 2 from Thermotoga maritima (strain ATCC 43589 / DSM 3109 / JCM 10099 / NBRC 100826 / MSB8).